Here is a 326-residue protein sequence, read N- to C-terminus: Cytosolic sulfotransferase 12 (326 aa).

75–80 is a 3'-phosphoadenylyl sulfate binding site; sequence KSGTTW. The Proton acceptor role is filled by His140. Residues Arg162, Ser170, Tyr228, and 290-292 contribute to the 3'-phosphoadenylyl sulfate site; that span reads RKG.

Belongs to the sulfotransferase 1 family. Dimer. Expressed in the aerial parts of seedlings, in roots, leaves and flowers. Not detected in stems and siliques.

The protein resides in the cytoplasm. Functionally, sulfotransferase that utilizes 3'-phospho-5'-adenylyl sulfate (PAPS) as sulfonate donor to catalyze the stereospecific sulfate conjugation of 24-epibrassinosteroids. Preferred substrates are 24-epicathasterone and 6-deoxo-24-epicathasterone. Low activity with 22-deoxy-24-epiteasterone. No activity with 24-epimers catasterone and brassinolide. Sulfonates salicylic acid. May be involved in detoxification. Enhances plant response to pathogen infection and contributes to long distance signaling in systemic acquired resistance (SAR). This Arabidopsis thaliana (Mouse-ear cress) protein is Cytosolic sulfotransferase 12 (SOT12).